Consider the following 181-residue polypeptide: ATP-dependent protease subunit HslV (181 aa).

Threonine 7 is an active-site residue. 3 residues coordinate Na(+): alanine 166, cysteine 169, and threonine 172.

This sequence belongs to the peptidase T1B family. HslV subfamily. As to quaternary structure, a double ring-shaped homohexamer of HslV is capped on each side by a ring-shaped HslU homohexamer. The assembly of the HslU/HslV complex is dependent on binding of ATP.

It localises to the cytoplasm. It carries out the reaction ATP-dependent cleavage of peptide bonds with broad specificity.. Its activity is regulated as follows. Allosterically activated by HslU binding. Its function is as follows. Protease subunit of a proteasome-like degradation complex believed to be a general protein degrading machinery. The protein is ATP-dependent protease subunit HslV of Anaeromyxobacter sp. (strain Fw109-5).